Consider the following 882-residue polypeptide: Cadherin-1 (882 aa).

Residues 1-22 (MGPWSRSLSALLLLLQVSSWLC) form the signal peptide. Residues 23-154 (QEPEPCHPGF…SSSGLRRRKR (132 aa)) constitute a propeptide that is removed on maturation. The N-linked (GlcNAc...) asparagine glycan is linked to N144. Cadherin domains lie at 155–262 (DWVI…KPEF), 263–375 (TQEV…PPVF), 376–486 (NPTT…APIF), 487–593 (VPPE…DNAP), and 594–697 (IPEP…VCKK). Over 155 to 709 (DWVIPPISCP…PIEAGLQIPA (555 aa)) the chain is Extracellular. D257 contributes to the Ca(2+) binding site. A glycan (O-linked (Man...) serine) is linked at S280. T285 carries an O-linked (Man...) threonine glycan. D288 is a Ca(2+) binding site. Residues T358, T470, T472, and T509 are each glycosylated (O-linked (Man...) threonine). N-linked (GlcNAc...) asparagine glycosylation occurs at N558. O-linked (Man...) threonine glycans are attached at residues T576, T578, and T580. The N-linked (GlcNAc...) asparagine glycan is linked to N637. The chain crosses the membrane as a helical span at residues 710–730 (ILGILGGILALLILILLLLLF). The Cytoplasmic segment spans residues 731 to 882 (LRRRAVVKEP…ADMYGGGEDD (152 aa)). A disordered region spans residues 747-767 (DTRDNVYYYDEEGGGEEDQDF). A phosphotyrosine; by SRC mark is found at Y753, Y754, and Y755. Over residues 755–767 (YDEEGGGEEDQDF) the composition is skewed to acidic residues. The segment at 758-769 (EGGGEEDQDFDL) is required for binding CTNND1 and PSEN1. 5 positions are modified to phosphoserine: S770, S793, S838, S840, and S846. A required for binding alpha, beta and gamma catenins region spans residues 811-882 (IDENLKAADT…ADMYGGGEDD (72 aa)).

In terms of assembly, homodimer; disulfide-linked. Component of an E-cadherin/ catenin adhesion complex composed of at least E-cadherin/CDH1, beta-catenin/CTNNB1 or gamma-catenin/JUP, and potentially alpha-catenin/CTNNA1; the complex is located to adherens junctions. Found in a complex composed of CDH1, RAP1A and PKP3; PKP3 acts as a scaffold protein within the complex, the complex is required for CDH1 localization to mature desmosome cell junctions. Interacts with the TRPV4 and CTNNB1 complex. Interacts with CTNND1. The stable association of CTNNA1 is controversial as CTNNA1 was shown not to bind to F-actin when assembled in the complex. Alternatively, the CTNNA1-containing complex may be linked to F-actin by other proteins such as LIMA1. Interaction with PSEN1, cleaves CDH1 resulting in the disassociation of cadherin-based adherens junctions (CAJs). Interacts with AJAP1 and DLGAP5. Interacts with TBC1D2. Interacts with LIMA1. Interacts with CAV1. Interacts with PIP5K1C. Interacts with RAB8B. Interacts with DDR1; this stabilizes CDH1 at the cell surface and inhibits its internalization. Interacts with RAPGEF2. Interacts with KLRG1. Forms a ternary complex composed of ADAM10, CADH1 and EPHA4; within the complex, CADH1 is cleaved by ADAM10 which disrupts adherens junctions. Interacts with SPEF1. Interacts with CTNNB1 and PKP2. Interacts with AMOTL2; the interaction may facilitate binding of radial actin fibers to cell junction complexes. Interacts with DSG3; the interaction is required for CDH1 localization to developing adherens junctions. In terms of processing, during apoptosis or with calcium influx, cleaved by a membrane-bound metalloproteinase (ADAM10), PS1/gamma-secretase and caspase-3. Processing by the metalloproteinase, induced by calcium influx, causes disruption of cell-cell adhesion and the subsequent release of beta-catenin into the cytoplasm. The residual membrane-tethered cleavage product is rapidly degraded via an intracellular proteolytic pathway. Cleavage by caspase-3 releases the cytoplasmic tail resulting in disintegration of the actin microfilament system. The gamma-secretase-mediated cleavage promotes disassembly of adherens junctions. During development of the cochlear organ of Corti, cleavage by ADAM10 at adherens junctions promotes pillar cell separation. N-glycosylation at Asn-637 is essential for expression, folding and trafficking. Addition of bisecting N-acetylglucosamine by MGAT3 modulates its cell membrane location. Post-translationally, ubiquitinated by a SCF complex containing SKP2, which requires prior phosphorylation by CK1/CSNK1A1. Ubiquitinated by CBLL1/HAKAI, requires prior phosphorylation at Tyr-754. In terms of processing, O-glycosylated. O-manosylated by TMTC1, TMTC2, TMTC3 or TMTC4. Thr-285 and Thr-509 are O-mannosylated by TMTC2 or TMTC4 but not TMTC1 or TMTC3.

The protein localises to the cell junction. It localises to the adherens junction. It is found in the cell membrane. The protein resides in the endosome. Its subcellular location is the golgi apparatus. The protein localises to the trans-Golgi network. It localises to the cytoplasm. It is found in the desmosome. Functionally, cadherins are calcium-dependent cell adhesion proteins. They preferentially interact with themselves in a homophilic manner in connecting cells; cadherins may thus contribute to the sorting of heterogeneous cell types. CDH1 is involved in mechanisms regulating cell-cell adhesions, mobility and proliferation of epithelial cells. Promotes organization of radial actin fiber structure and cellular response to contractile forces, via its interaction with AMOTL2 which facilitates anchoring of radial actin fibers to CDH1 junction complexes at the cell membrane. Plays a role in the early stages of desmosome cell-cell junction formation via facilitating the recruitment of DSG2 and DSP to desmosome plaques. Has a potent invasive suppressor role. It is a ligand for integrin alpha-E/beta-7. In terms of biological role, E-Cad/CTF2 promotes non-amyloidogenic degradation of Abeta precursors. Has a strong inhibitory effect on APP C99 and C83 production. The sequence is that of Cadherin-1 (CDH1) from Pongo abelii (Sumatran orangutan).